Consider the following 763-residue polypeptide: 1,4-alpha-glucan branching enzyme GlgB (763 aa).

Asp437 (nucleophile) is an active-site residue. Catalysis depends on Glu488, which acts as the Proton donor.

Belongs to the glycosyl hydrolase 13 family. GlgB subfamily. Monomer.

The catalysed reaction is Transfers a segment of a (1-&gt;4)-alpha-D-glucan chain to a primary hydroxy group in a similar glucan chain.. It functions in the pathway glycan biosynthesis; glycogen biosynthesis. In terms of biological role, catalyzes the formation of the alpha-1,6-glucosidic linkages in glycogen by scission of a 1,4-alpha-linked oligosaccharide from growing alpha-1,4-glucan chains and the subsequent attachment of the oligosaccharide to the alpha-1,6 position. In Synechococcus sp. (strain JA-2-3B'a(2-13)) (Cyanobacteria bacterium Yellowstone B-Prime), this protein is 1,4-alpha-glucan branching enzyme GlgB.